Consider the following 233-residue polypeptide: Large ribosomal subunit protein uL1 (233 aa).

It belongs to the universal ribosomal protein uL1 family. In terms of assembly, part of the 50S ribosomal subunit.

In terms of biological role, binds directly to 23S rRNA. Forms the L1 stalk. Unlike the case in the Thermus thermophilus 70S ribosome, this protein is not seen to block the exit path of the E site tRNA. It is clear that the protein in the structure is flexible however, so this is probably due to its position in these crystals. Protein L1 is also a translational repressor protein, it controls the translation of the L11 operon by binding to its mRNA. The polypeptide is Large ribosomal subunit protein uL1 (rplA) (Deinococcus radiodurans (strain ATCC 13939 / DSM 20539 / JCM 16871 / CCUG 27074 / LMG 4051 / NBRC 15346 / NCIMB 9279 / VKM B-1422 / R1)).